The following is a 197-amino-acid chain: Phosphoheptose isomerase (197 aa).

In terms of domain architecture, SIS spans 34–196; that stretch reads MVHCLLGGNK…DRTLFPQDEQ (163 aa). 49 to 51 serves as a coordination point for substrate; that stretch reads NGG. Residues H58 and E62 each contribute to the Zn(2+) site. Substrate contacts are provided by residues E62, 91–92, 117–119, S122, and Q172; these read ND and STS. Zn(2+) contacts are provided by Q172 and H180.

This sequence belongs to the SIS family. GmhA subfamily. As to quaternary structure, homotetramer. Zn(2+) is required as a cofactor.

Its subcellular location is the cytoplasm. The catalysed reaction is 2 D-sedoheptulose 7-phosphate = D-glycero-alpha-D-manno-heptose 7-phosphate + D-glycero-beta-D-manno-heptose 7-phosphate. The protein operates within carbohydrate biosynthesis; D-glycero-D-manno-heptose 7-phosphate biosynthesis; D-glycero-alpha-D-manno-heptose 7-phosphate and D-glycero-beta-D-manno-heptose 7-phosphate from sedoheptulose 7-phosphate: step 1/1. Functionally, catalyzes the isomerization of sedoheptulose 7-phosphate in D-glycero-D-manno-heptose 7-phosphate. The chain is Phosphoheptose isomerase from Shewanella sediminis (strain HAW-EB3).